The chain runs to 631 residues: Probable glutamate--tRNA ligase, cytoplasmic (631 aa).

139 to 141 contributes to the L-glutamate binding site; that stretch reads RFP. The 'HIGH' region motif lies at 144–153; sequence PSGFLHIGHI. Position 149 (histidine 149) interacts with ATP. Residues aspartate 173, 311-315, and arginine 329 contribute to the L-glutamate site; that span reads YDFAC. ATP-binding positions include glutamate 332 and 367-371; that span reads VLSKR. Positions 367 to 371 match the 'KMSKS' region motif; it reads VLSKR.

It belongs to the class-I aminoacyl-tRNA synthetase family. Glutamate--tRNA ligase type 2 subfamily.

It localises to the cytoplasm. The catalysed reaction is tRNA(Glu) + L-glutamate + ATP = L-glutamyl-tRNA(Glu) + AMP + diphosphate. The polypeptide is Probable glutamate--tRNA ligase, cytoplasmic (Enterocytozoon bieneusi (strain H348) (Microsporidian parasite)).